The sequence spans 365 residues: Tartrate dehydrogenase/decarboxylase (365 aa).

Residues Asp-225, Asp-250, and Asp-254 each coordinate Mn(2+).

This sequence belongs to the isocitrate and isopropylmalate dehydrogenases family. Homodimer. Mg(2+) serves as cofactor. The cofactor is Mn(2+). It depends on K(+) as a cofactor.

Its subcellular location is the cytoplasm. The catalysed reaction is tartrate + NAD(+) = 2-hydroxy-3-oxosuccinate + NADH + H(+). It carries out the reaction (2R,3S)-tartrate + NAD(+) = 2-hydroxy-3-oxosuccinate + NADH + H(+). It catalyses the reaction (2R,3R)-tartrate + NAD(+) = 2-hydroxy-3-oxosuccinate + NADH + H(+). The enzyme catalyses (2R,3R)-tartrate + H(+) = (R)-glycerate + CO2. The catalysed reaction is (R)-malate + NAD(+) = pyruvate + CO2 + NADH. It functions in the pathway carbohydrate acid metabolism; tartrate degradation; 2-hydroxy-3-oxosuccinate from L-tartrate: step 1/1. Its pathway is carbohydrate acid metabolism; tartrate degradation; 2-hydroxy-3-oxosuccinate from meso-tartrate: step 1/1. It participates in carbohydrate acid metabolism; tartrate degradation; D-glycerate from L-tartrate: step 1/1. Functionally, has multiple catalytic activities. Apart from catalyzing the oxidation of (+)-tartrate to oxaloglycolate, also converts meso-tartrate to D-glycerate and catalyzes the oxidative decarboxylation of D-malate to pyruvate. In Pseudomonas putida (Arthrobacter siderocapsulatus), this protein is Tartrate dehydrogenase/decarboxylase.